The chain runs to 446 residues: Chromosomal replication initiator protein DnaA (446 aa).

Residues 1 to 81 are domain I, interacts with DnaA modulators; that stretch reads MENISDLWNS…AKLAIRFIIP (81 aa). The domain II stretch occupies residues 81–109; that stretch reads PQSQAEEDIDLPSVKQKHAHDESNHLPQS. Residues 110 to 326 form a domain III, AAA+ region region; it reads MLNPKYTFDT…GALIRVVAYS (217 aa). ATP-binding residues include Gly-154, Gly-156, Lys-157, and Thr-158. The tract at residues 327-446 is domain IV, binds dsDNA; sequence SLINKDMNAD…HVEEVKDILK (120 aa).

This sequence belongs to the DnaA family. As to quaternary structure, oligomerizes as a right-handed, spiral filament on DNA at oriC.

It localises to the cytoplasm. Its function is as follows. Plays an essential role in the initiation and regulation of chromosomal replication. ATP-DnaA binds to the origin of replication (oriC) to initiate formation of the DNA replication initiation complex once per cell cycle. Binds the DnaA box (a 9 base pair repeat at the origin) and separates the double-stranded (ds)DNA. Forms a right-handed helical filament on oriC DNA; dsDNA binds to the exterior of the filament while single-stranded (ss)DNA is stabiized in the filament's interior. The ATP-DnaA-oriC complex binds and stabilizes one strand of the AT-rich DNA unwinding element (DUE), permitting loading of DNA polymerase. After initiation quickly degrades to an ADP-DnaA complex that is not apt for DNA replication. Binds acidic phospholipids. This is Chromosomal replication initiator protein DnaA from Bacillus mycoides (strain KBAB4) (Bacillus weihenstephanensis).